A 334-amino-acid chain; its full sequence is Atypical chemokine receptor 1 (334 aa).

Residues 1 to 61 (MGNCLYPVET…CNLLDRSSLP (61 aa)) lie on the Extracellular side of the membrane. Residues asparagine 16, asparagine 26, and asparagine 32 are each glycosylated (N-linked (GlcNAc...) asparagine). 2 cysteine pairs are disulfide-bonded: cysteine 49–cysteine 274 and cysteine 127–cysteine 193. The helical transmembrane segment at 62–82 (FFMLTSVLGMLASGSILFAIL) threads the bilayer. At 83-93 (RPFFHWQICPS) the chain is on the cytoplasmic side. The chain crosses the membrane as a helical span at residues 94-114 (WPILAELAVGSALFSIAVPIL). Over 115 to 127 (APGLHSAHSTALC) the chain is Extracellular. A helical transmembrane segment spans residues 128–151 (NLGYWVWYTSAFAQALLIGCYACL). The Cytoplasmic portion of the chain corresponds to 152–164 (NPRLNIGQLRGFT). Residues 165-185 (LGLSVGLWGAAALSGLPVALA) traverse the membrane as a helical segment. At 186–205 (SDVYNGFCTFPSSRDMEALK) the chain is on the extracellular side. Residues 206 to 226 (YTHYAICFTIFTVLPLTLLAA) form a helical membrane-spanning segment. Residues 227–242 (KGLKIALSKGPGPWVS) lie on the Cytoplasmic side of the membrane. Residues 243–263 (VLWIWFIFWWPHGMVLIFDAL) traverse the membrane as a helical segment. The Extracellular portion of the chain corresponds to 264 to 285 (VRSKTVLLYTCQSQKILDAMLN). The N-linked (GlcNAc...) asparagine glycan is linked to asparagine 285. Residues 286 to 306 (VTEALSMLHCVATPLLLALFC) traverse the membrane as a helical segment. Residues 307–334 (HQTTRRSLSSLSLPTRQASQMDALAGKS) lie on the Cytoplasmic side of the membrane.

It belongs to the G-protein coupled receptor 1 family. Atypical chemokine receptor subfamily. In terms of tissue distribution, expressed in liver and brain.

It is found in the early endosome. It localises to the recycling endosome. Its subcellular location is the membrane. In terms of biological role, atypical chemokine receptor that controls chemokine levels and localization via high-affinity chemokine binding that is uncoupled from classic ligand-driven signal transduction cascades, resulting instead in chemokine sequestration, degradation, or transcytosis. Also known as interceptor (internalizing receptor) or chemokine-scavenging receptor or chemokine decoy receptor. Has a promiscuous chemokine-binding profile, interacting with inflammatory chemokines of both the CXC and the CC subfamilies but not with homeostatic chemokines. Acts as a receptor for chemokines including CCL2, CCL5, CCL7, CCL11, CCL13, CCL14, CCL17, CXCL5, CXCL6, IL8/CXCL8, CXCL11, GRO, RANTES, MCP-1 and TARC. May regulate chemokine bioavailability and, consequently, leukocyte recruitment through two distinct mechanisms: when expressed in endothelial cells, it sustains the abluminal to luminal transcytosis of tissue-derived chemokines and their subsequent presentation to circulating leukocytes; when expressed in erythrocytes, serves as blood reservoir of cognate chemokines but also as a chemokine sink, buffering potential surges in plasma chemokine levels. Its function is as follows. (Microbial infection) Acts as a receptor for the malaria parasite Plasmodium yoelii in mature erythrocytes but not reticulocytes. In Mus musculus (Mouse), this protein is Atypical chemokine receptor 1 (Ackr1).